Here is a 706-residue protein sequence, read N- to C-terminus: Polyribonucleotide nucleotidyltransferase (706 aa).

The Mg(2+) site is built by Asp488 and Asp494. Residues 555–614 (PRLFTMKINPDKIRDVIGKGGSVIRALTEETGTQINIDEDGTITIASADPAKAEEAKRRI) form the KH domain. The region spanning 624–692 (GKIYEGPITK…EKGRIKLSMK (69 aa)) is the S1 motif domain.

The protein belongs to the polyribonucleotide nucleotidyltransferase family. Mg(2+) is required as a cofactor.

The protein resides in the cytoplasm. The enzyme catalyses RNA(n+1) + phosphate = RNA(n) + a ribonucleoside 5'-diphosphate. Functionally, involved in mRNA degradation. Catalyzes the phosphorolysis of single-stranded polyribonucleotides processively in the 3'- to 5'-direction. In Albidiferax ferrireducens (strain ATCC BAA-621 / DSM 15236 / T118) (Rhodoferax ferrireducens), this protein is Polyribonucleotide nucleotidyltransferase.